A 410-amino-acid chain; its full sequence is DNA primase small subunit (410 aa).

Residues Glu43, Asp106, and Asp108 contribute to the active site. The Zinc knuckle motif motif lies at 118–129; sequence CCKDATVCPKCW.

The protein belongs to the eukaryotic-type primase small subunit family. As to quaternary structure, heterodimer of a small subunit and a large subunit.

Its function is as follows. DNA primase is the polymerase that synthesizes small RNA primers for the Okazaki fragments made during discontinuous DNA replication. The sequence is that of DNA primase small subunit (pri-1) from Caenorhabditis elegans.